A 1074-amino-acid chain; its full sequence is DNA annealing helicase and endonuclease ZRANB3 (1074 aa).

Residues 46-208 (TFALRRDGRC…FMQIEALFPQ (163 aa)) enclose the Helicase ATP-binding domain. The DNA annealing helicase activity stretch occupies residues 46–481 (TFALRRDGRC…GRKEKLQAEE (436 aa)). ATP is bound at residue 59–66 (DEMGLGKT). The DEAH box motif lies at 157-160 (DESH). The Helicase C-terminal domain occupies 325 to 481 (AVKDYIKMML…GRKEKLQAEE (157 aa)). Residues 519-526 (QRDIRSFF) carry the PIP-box motif. Position 566 is a phosphoserine (Ser-566). The RanBP2-type zinc-finger motif lies at 617-647 (FCGEGWQCAFCTYINNSVLPYCEMCENPRGG). The interval 659–719 (QNKNKNEKDD…RLTPQPGDEQ (61 aa)) is disordered. 2 stretches are compositionally biased toward basic and acidic residues: residues 662 to 674 (NKNE…DTSK) and 696 to 711 (AKSK…EDRL). Positions 1006–1046 (PGEGHFWQVDHIKPVSGGGGQCSLDNLQTLCTVCHRERTAQ) constitute an HNH domain. The tract at residues 1006–1074 (PGEGHFWQVD…SDITRFLVKK (69 aa)) is endonuclease activity. Residues 1069 to 1073 (RFLVK) carry the APIM motif motif.

Belongs to the SNF2/RAD54 helicase family. As to quaternary structure, interacts (via PIP-box and RanBP2-type zinc finger) with PCNA (when PCNA is polyubiquitinated via 'Lys-63'-linked polyubiquitin).

The protein resides in the nucleus. It is found in the chromosome. Its function is as follows. DNA annealing helicase and endonuclease required to maintain genome stability at stalled or collapsed replication forks by facilitating fork restart and limiting inappropriate recombination that could occur during template switching events. Recruited to the sites of stalled DNA replication by polyubiquitinated PCNA and acts as a structure-specific endonuclease that cleaves the replication fork D-loop intermediate, generating an accessible 3'-OH group in the template of the leading strand, which is amenable to extension by DNA polymerase. In addition to endonuclease activity, also catalyzes the fork regression via annealing helicase activity in order to prevent disintegration of the replication fork and the formation of double-strand breaks. The sequence is that of DNA annealing helicase and endonuclease ZRANB3 (ZRANB3) from Bos taurus (Bovine).